The sequence spans 150 residues: MVEESELKYFVRIINTDLDGTQPVQLALTGIKGIGLHAALIIARRAGVDTRATMGLLGDEDVAAIEEQVKAYPASVPKWMVNRPVDVYSGEPKHLYGSDLSLAKEDDINLMKKMRCYRGIRHENGLKVRGQRTKATGRFGKIVGVSKRRN.

The protein belongs to the universal ribosomal protein uS13 family. As to quaternary structure, part of the 30S ribosomal subunit. Forms a loose heterodimer with protein S19. Forms two bridges to the 50S subunit in the 70S ribosome.

Its function is as follows. Located at the top of the head of the 30S subunit, it contacts several helices of the 16S rRNA. In the 70S ribosome it contacts the 23S rRNA (bridge B1a) and protein L5 of the 50S subunit (bridge B1b), connecting the 2 subunits; these bridges are implicated in subunit movement. The sequence is that of Small ribosomal subunit protein uS13 from Methanocorpusculum labreanum (strain ATCC 43576 / DSM 4855 / Z).